The chain runs to 372 residues: Alanine racemase (372 aa).

Catalysis depends on Lys-48, which acts as the Proton acceptor; specific for D-alanine. Lys-48 carries the N6-(pyridoxal phosphate)lysine modification. Residue Arg-143 participates in substrate binding. Tyr-268 (proton acceptor; specific for L-alanine) is an active-site residue. Met-316 contributes to the substrate binding site.

Belongs to the alanine racemase family. The cofactor is pyridoxal 5'-phosphate.

It carries out the reaction L-alanine = D-alanine. Its pathway is amino-acid biosynthesis; D-alanine biosynthesis; D-alanine from L-alanine: step 1/1. In terms of biological role, catalyzes the interconversion of L-alanine and D-alanine. May also act on other amino acids. The chain is Alanine racemase (alr) from Vibrio vulnificus (strain YJ016).